Here is a 384-residue protein sequence, read N- to C-terminus: S-adenosylmethionine synthase (384 aa).

H15 contributes to the ATP binding site. D17 is a binding site for Mg(2+). K(+) is bound at residue E43. Positions 56 and 99 each coordinate L-methionine. The flexible loop stretch occupies residues 99–109; it reads QSPDINQGVDK. ATP contacts are provided by residues 164–166, 230–231, D239, 245–246, A262, and K266; these read DAK, RF, and RK. An L-methionine-binding site is contributed by D239. K270 is a binding site for L-methionine.

The protein belongs to the AdoMet synthase family. As to quaternary structure, homotetramer; dimer of dimers. The cofactor is Mg(2+). K(+) serves as cofactor.

It is found in the cytoplasm. It carries out the reaction L-methionine + ATP + H2O = S-adenosyl-L-methionine + phosphate + diphosphate. It functions in the pathway amino-acid biosynthesis; S-adenosyl-L-methionine biosynthesis; S-adenosyl-L-methionine from L-methionine: step 1/1. Catalyzes the formation of S-adenosylmethionine (AdoMet) from methionine and ATP. The overall synthetic reaction is composed of two sequential steps, AdoMet formation and the subsequent tripolyphosphate hydrolysis which occurs prior to release of AdoMet from the enzyme. This is S-adenosylmethionine synthase from Aliivibrio salmonicida (strain LFI1238) (Vibrio salmonicida (strain LFI1238)).